The chain runs to 192 residues: Orotate phosphoribosyltransferase (192 aa).

E116 to S124 provides a ligand contact to 5-phospho-alpha-D-ribose 1-diphosphate. Orotate-binding residues include T120 and R148.

Belongs to the purine/pyrimidine phosphoribosyltransferase family. PyrE subfamily. Homodimer. It depends on Mg(2+) as a cofactor.

It catalyses the reaction orotidine 5'-phosphate + diphosphate = orotate + 5-phospho-alpha-D-ribose 1-diphosphate. Its pathway is pyrimidine metabolism; UMP biosynthesis via de novo pathway; UMP from orotate: step 1/2. In terms of biological role, catalyzes the transfer of a ribosyl phosphate group from 5-phosphoribose 1-diphosphate to orotate, leading to the formation of orotidine monophosphate (OMP). The sequence is that of Orotate phosphoribosyltransferase from Clostridium perfringens (strain ATCC 13124 / DSM 756 / JCM 1290 / NCIMB 6125 / NCTC 8237 / Type A).